A 118-amino-acid polypeptide reads, in one-letter code: Small ribosomal subunit protein uS13 (118 aa).

Positions 94-118 (GLPLRGQRTKTNARTRKGRRKGTSS) are disordered.

It belongs to the universal ribosomal protein uS13 family. As to quaternary structure, part of the 30S ribosomal subunit. Forms a loose heterodimer with protein S19. Forms two bridges to the 50S subunit in the 70S ribosome.

In terms of biological role, located at the top of the head of the 30S subunit, it contacts several helices of the 16S rRNA. In the 70S ribosome it contacts the 23S rRNA (bridge B1a) and protein L5 of the 50S subunit (bridge B1b), connecting the 2 subunits; these bridges are implicated in subunit movement. Contacts the tRNAs in the A and P-sites. The sequence is that of Small ribosomal subunit protein uS13 from Legionella pneumophila (strain Paris).